The primary structure comprises 97 residues: HssA/B-like protein 47 (97 aa).

The segment at 1–33 (MTLFSSISSISNPMTSSKSSIASFGSGTSMSSN) is disordered.

Belongs to the hssA/B family.

The chain is HssA/B-like protein 47 (hssl47) from Dictyostelium discoideum (Social amoeba).